The sequence spans 265 residues: Iron(3+)-hydroxamate import ATP-binding protein FhuC (265 aa).

Positions 12–248 (FALRNISFRV…ETLEMIYGIP (237 aa)) constitute an ABC transporter domain. ATP contacts are provided by residues 44–51 (GHNGSGKS) and 168–179 (CLLLDEPTSALD).

Belongs to the ABC transporter superfamily. Iron (Fe3+)-hydroxamate importer (TC 3.A.1.14.7) family. The complex is composed of two ATP-binding proteins (FhuC), a transmembrane protein (FhuB) and a solute-binding protein (FhuD). FhuC interacts with FhuB.

It is found in the cell inner membrane. It catalyses the reaction ATP + H2O + Fe(3+)-hydroxamate complex-[hydroxamate-binding protein]Side 1 = ADP + phosphate + Fe(3+)-hydroxamate complexSide 2 + [hydroxamate-binding protein]Side 1.. With respect to regulation, ATPase activity is inhibited by vanadate. In terms of biological role, part of the ABC transporter complex FhuCDB involved in iron(3+)-hydroxamate import. Responsible for energy coupling to the transport system. This is Iron(3+)-hydroxamate import ATP-binding protein FhuC (fhuC) from Escherichia coli (strain K12).